A 233-amino-acid polypeptide reads, in one-letter code: Small ribosomal subunit protein uS3 (233 aa).

Residues 28–96 (EFADNLDSDF…LRKVVADIAG (69 aa)) enclose the KH type-2 domain.

The protein belongs to the universal ribosomal protein uS3 family. As to quaternary structure, part of the 30S ribosomal subunit. Forms a tight complex with proteins S10 and S14.

Binds the lower part of the 30S subunit head. Binds mRNA in the 70S ribosome, positioning it for translation. This Shigella flexneri protein is Small ribosomal subunit protein uS3.